A 101-amino-acid polypeptide reads, in one-letter code: Cilia- and flagella-associated protein 141 (101 aa).

As to quaternary structure, microtubule inner protein component of sperm flagellar doublet microtubules.

It is found in the cytoplasm. The protein localises to the cytoskeleton. It localises to the cilium axoneme. The protein resides in the flagellum axoneme. In terms of biological role, microtubule inner protein (MIP) part of the dynein-decorated doublet microtubules (DMTs) in cilia axoneme, which is required for motile cilia beating. The polypeptide is Cilia- and flagella-associated protein 141 (Mus musculus (Mouse)).